A 206-amino-acid chain; its full sequence is Ephrin-A4 (206 aa).

Positions 1–25 (MRLLPLLRTVLWAALLGSRLPGCSS) are cleaved as a signal peptide. The region spanning 26–158 (LRHPIYWNSS…RLQVSVCCKE (133 aa)) is the Ephrin RBD domain. N33 is a glycosylation site (N-linked (GlcNAc...) asparagine). Residues 41 to 43 (RGD) carry the Cell attachment site motif. Cystine bridges form between C58–C99 and C86–C147. The N-linked (GlcNAc...) asparagine glycan is linked to N98. The disordered stretch occupies residues 161–180 (SSHESAHPVGSPGESGTSGW). Residue S175 is the site of GPI-anchor amidated serine attachment. Positions 176–206 (GTSGWRGGHAPSPLCLLLLLLLPILRLLRVL) are cleaved as a propeptide — removed in mature form.

This sequence belongs to the ephrin family. As to expression, expressed in myogenic progenitor cells.

The protein resides in the cell membrane. In terms of biological role, cell surface GPI-bound ligand for Eph receptors, a family of receptor tyrosine kinases which are crucial for migration, repulsion and adhesion during neuronal, vascular and epithelial development. Binds promiscuously Eph receptors residing on adjacent cells, leading to contact-dependent bidirectional signaling into neighboring cells. May play a role in the interaction between activated B-lymphocytes and dendritic cells in tonsils. The protein is Ephrin-A4 (Efna4) of Mus musculus (Mouse).